Consider the following 375-residue polypeptide: Serpentine receptor class alpha-39 (375 aa).

Helical transmembrane passes span 17–37 (LFAI…LFII), 51–71 (LVFL…LTAW), 99–119 (IRGT…GILL), 138–158 (LGTI…FILL), 183–203 (VYVM…VHLV), 236–256 (TPLL…VSVF), and 275–295 (LFIM…ELWL).

This sequence belongs to the nematode receptor-like protein sra family.

The protein resides in the membrane. The sequence is that of Serpentine receptor class alpha-39 (sra-39) from Caenorhabditis elegans.